Consider the following 270-residue polypeptide: MKILSLSLLLLLAATVSHVQSSASVPGLIELLESNTIFGNEAELLEKEGLSINYPNCRSWHLGVETSNIINFDTVPANCKAYVEDYLITSKQYQYDSKTVNKEAYFYAKGLALKNDTVNVWIFDLDDTLLSSIPYYAKYGYGTENTAPGAYWSWLESGESTPGLPETLHLYENLLELGIEPIIISDRWKKLSEVTVENLKAVGVTKWKHLILKPNGSKLTQVVYKSKVRNSLVKKGYNIVGNIGDQWADLVEDTPGRVFKLPNPLYYVPS.

The first 17 residues, 1-17, serve as a signal peptide directing secretion; that stretch reads MKILSLSLLLLLAATVS. Residues N115 and N215 are each glycosylated (N-linked (GlcNAc...) asparagine).

The protein belongs to the APS1/VSP family. In terms of tissue distribution, expressed in leaves and in gynoecia, especially in styles, the basal and distal ends of ovaries and in siliques.

In terms of biological role, may function as somatic storage protein during early seedling development. The polypeptide is Vegetative storage protein 1 (VSP1) (Arabidopsis thaliana (Mouse-ear cress)).